The chain runs to 697 residues: Exocyst complex component 7 (697 aa).

The SEC8 and ARHQ binding stretch occupies residues 1–384 (MIPPQEASAR…FSTVLTVFPI (384 aa)). Coiled coils occupy residues 5–42 (QEASARRREIEDKLKQEEETLSFIRDSLEKSDQLTRNM) and 63–85 (VHKQTENLQRLQENVEKTLSCLD). Residue Ser133 is modified to Phosphoserine. The segment at 238–270 (FRKSSSSSGVPYSPAIPNKRKDTPTKKPIKRPG) is disordered.

Belongs to the EXO70 family. In terms of assembly, the exocyst complex is composed of EXOC1, EXOC2, EXOC3, EXOC4, EXOC5, EXOC6, EXOC7 and EXOC8. Interacts with RAB11FIP3. Interacts with ARHQ in a GTP-dependent manner.

It is found in the cytoplasm. Its subcellular location is the cytosol. It localises to the cell membrane. The protein resides in the midbody. The protein localises to the midbody ring. Functionally, component of the exocyst complex involved in the docking of exocytic vesicles with fusion sites on the plasma membrane. In adipocytes, plays a crucial role in targeting SLC2A4 vesicle to the plasma membrane in response to insulin, perhaps directing the vesicle to the precise site of fusion. It is required for neuron survival and plays an essential role in cortical development. This is Exocyst complex component 7 (Exoc7) from Mus musculus (Mouse).